The chain runs to 103 residues: MYAVFQSGGKQHRVAEGQTVRLEKIEVAPGESVEFGDILMVSNGEDVKIGTPFVSGGKVTAEVVTHGRGEKVKIVKFRRRKHSRTQMGHRQWFTEVKITGISA.

It belongs to the bacterial ribosomal protein bL21 family. In terms of assembly, part of the 50S ribosomal subunit. Contacts protein L20.

Its function is as follows. This protein binds to 23S rRNA in the presence of protein L20. In Pseudoalteromonas atlantica (strain T6c / ATCC BAA-1087), this protein is Large ribosomal subunit protein bL21.